The primary structure comprises 129 residues: Replication initiation control protein YabA (129 aa).

Zn(2+) is bound by residues His-103, Cys-105, Cys-119, and Cys-122.

Belongs to the YabA family. In terms of assembly, homotetramer. Interacts with both DnaA and DnaN, acting as a bridge between these two proteins. It depends on Zn(2+) as a cofactor.

It is found in the cytoplasm. Its subcellular location is the nucleoid. Its function is as follows. Involved in control of chromosome replication initiation. Inhibits the cooperative binding of DnaA to the oriC region, thus negatively regulating initiation of chromosome replication. Inhibits the ability of DnaA-ATP to form a helix on DNA; does not disassemble preformed DnaA-DNA helices. Decreases the residence time of DnaA on the chromosome at its binding sites (oriC, replication forks and promoter-binding sites). Tethers DnaA to the replication machinery via the DNA polymerase beta sliding clamp subunit (dnaN). Associates with oriC and other DnaA targets on the chromosome in a DnaA-dependent manner. In Listeria monocytogenes serotype 4b (strain CLIP80459), this protein is Replication initiation control protein YabA.